A 364-amino-acid polypeptide reads, in one-letter code: Protein Wnt-16 (364 aa).

The N-terminal stretch at 1 to 29 is a signal peptide; that stretch reads MDRAALLALPSLCALWAAVLSLLPCGTQG. Disulfide bonds link C81/C92, C138/C146, and C148/C167. The N-linked (GlcNAc...) asparagine glycan is linked to N142. N188 is a glycosylation site (N-linked (GlcNAc...) asparagine). Cystine bridges form between C220–C234, C222–C229, C293–C324, C309–C319, C323–C363, C339–C354, C341–C351, and C346–C347. Residue S226 is the site of O-palmitoleoyl serine; by PORCN attachment. A glycan (N-linked (GlcNAc...) asparagine) is linked at N310.

The protein belongs to the Wnt family. In terms of processing, palmitoleoylation is required for efficient binding to frizzled receptors. Depalmitoleoylation leads to Wnt signaling pathway inhibition.

It localises to the secreted. It is found in the extracellular space. Its subcellular location is the extracellular matrix. Ligand for members of the frizzled family of seven transmembrane receptors. Probable developmental protein. May be a signaling molecule which affects the development of discrete regions of tissues. Is likely to signal over only few cell diameters. The protein is Protein Wnt-16 (Wnt16) of Mus musculus (Mouse).